The chain runs to 157 residues: Endoribonuclease YbeY (157 aa).

Positions 111, 115, and 121 each coordinate Zn(2+).

Belongs to the endoribonuclease YbeY family. Zn(2+) serves as cofactor.

It localises to the cytoplasm. Its function is as follows. Single strand-specific metallo-endoribonuclease involved in late-stage 70S ribosome quality control and in maturation of the 3' terminus of the 16S rRNA. The polypeptide is Endoribonuclease YbeY (Pseudomonas putida (strain W619)).